Here is an 874-residue protein sequence, read N- to C-terminus: Ribosome biogenesis protein ERB1 (874 aa).

The interval 1–148 (MAKKEVSASK…DAFAAADAAT (148 aa)) is disordered. Residues 27–41 (QAVEKEEAEKEKEEG) show a composition bias toward basic and acidic residues. Over residues 55–77 (PESDSDDEGAAAAEEEEEEEEQQ) the composition is skewed to acidic residues. A compositionally biased stretch (basic and acidic residues) spans 78–89 (QDVKELDLDKGE). 2 stretches are compositionally biased toward acidic residues: residues 95-104 (SDAEDFDSEE) and 128-139 (PKEDGDEQDEQD). The tract at residues 312 to 429 (RFVPSKHEAK…LRLVPGYQDS (118 aa)) is required for interaction with NOP7. The segment at 429–465 (SVRERFERSLDLYLAPRLRKNKLNIDPESLIPELPSP) is required for interaction with YTM1. WD repeat units follow at residues 481-520 (GHTG…QVFK) and 529-569 (NGED…FEIE). The segment covering 593-602 (KVKGEDTKGD) has biased composition (basic and acidic residues). The disordered stretch occupies residues 593 to 640 (KVKGEDTKGDLDDDEEEEEEEEDDDDDEGQGKVKAHNSTAPAKKDVAK). A compositionally biased stretch (acidic residues) spans 603-620 (LDDDEEEEEEEEDDDDDE). WD repeat units lie at residues 658-700 (QCRR…SQSP), 703-741 (KSKG…LLKK), 744-783 (PGVR…TPYK), 787-827 (YHEK…DLMT), and 843-874 (INQI…LWTT).

This sequence belongs to the WD repeat BOP1/ERB1 family. In terms of assembly, component of the NOP7 complex, composed of ERB1, NOP7 and YTM1. The complex is held together by ERB1, which interacts with NOP7 via its N-terminal domain and with YTM1 via a high-affinity interaction between the seven-bladed beta-propeller domains of the 2 proteins. The NOP7 complex associates with the 66S pre-ribosome.

It localises to the nucleus. It is found in the nucleolus. Its subcellular location is the nucleoplasm. Its function is as follows. Component of the NOP7 complex, which is required for maturation of the 25S and 5.8S ribosomal RNAs and formation of the 60S ribosome. In Lodderomyces elongisporus (strain ATCC 11503 / CBS 2605 / JCM 1781 / NBRC 1676 / NRRL YB-4239) (Yeast), this protein is Ribosome biogenesis protein ERB1.